A 1230-amino-acid polypeptide reads, in one-letter code: Protein transport protein Sec31A (1230 aa).

7 WD repeats span residues 4-47 (KEID…EIFE), 64-111 (SSSH…AGDK), 120-160 (KHTG…TPMT), 166-206 (QPPE…PIIK), 209-254 (DHSN…SPLR), 258-298 (NHAR…VLYE), and 301-342 (TNTQ…DGLR). Residues 161–470 (PGAKTQPPED…IEASQTEFEK (310 aa)) form an interaction with SEC13 region. The stretch at 397–429 (SFSFGGKLVTFESVAVPLQQGAEQQRRQPVFIS) is one WD 8; interaction with SEC13 repeat. Arg423 bears the Asymmetric dimethylarginine mark. Phosphoserine is present on residues Ser526 and Ser531. Lys646 is covalently cross-linked (Glycyl lysine isopeptide (Lys-Gly) (interchain with G-Cter in ubiquitin)). Disordered stretches follow at residues 789–905 (QGKP…ASNA) and 924–1104 (MYTA…PIGN). Ser798 is modified (phosphoserine). Positions 799-1123 (SQSPYERQPL…TEKITKKPIP (325 aa)) are interaction with PDCD6. Positions 841-847 (GFIMQGN) match the ALG-2-binding site motif-2 (ABS-2) motif. Residues 866–876 (QLPPYPQPQPY) show a composition bias toward pro residues. Low complexity-rich tracts occupy residues 930 to 940 (ASSPTSSSAAS) and 959 to 975 (PSSS…GTPP). 2 stretches are compositionally biased toward polar residues: residues 981 to 995 (PASQ…QDQA) and 1033 to 1064 (PIMN…SFPQ). Position 1171 is a phosphothreonine (Thr1171). Phosphoserine is present on Ser1173. Residue Lys1227 forms a Glycyl lysine isopeptide (Lys-Gly) (interchain with G-Cter in ubiquitin) linkage.

This sequence belongs to the WD repeat SEC31 family. COPII is composed of at least 5 proteins: the SEC23/24 complex, the SEC13/31 complex and SAR1. SEC13 and SEC31 make a 2:2 tetramer that forms the edge element of the COPII outer coat. The tetramer self-assembles in multiple copies to form the complete polyhedral cage. Interacts (via WD 8) with SEC13. Interacts with PDCD6; interaction takes place in response to cytosolic calcium increase and leads to bridge together the BCR(KLHL12) complex and SEC31A, leading to monoubiquitination. Interacts with KLHL12. In terms of processing, monoubiquitinated by the BCR(KLHL12) E3 ubiquitin ligase complex, leading to regulate the size of COPII coats.

The protein localises to the cytoplasm. Its subcellular location is the cytoplasmic vesicle. The protein resides in the COPII-coated vesicle membrane. It localises to the endoplasmic reticulum membrane. In terms of biological role, component of the coat protein complex II (COPII) which promotes the formation of transport vesicles from the endoplasmic reticulum (ER). The coat has two main functions, the physical deformation of the endoplasmic reticulum membrane into vesicles and the selection of cargo molecules. This is Protein transport protein Sec31A (Sec31a) from Mus musculus (Mouse).